The chain runs to 578 residues: Proline--tRNA ligase (578 aa).

This sequence belongs to the class-II aminoacyl-tRNA synthetase family. ProS type 1 subfamily. As to quaternary structure, homodimer.

It is found in the cytoplasm. The enzyme catalyses tRNA(Pro) + L-proline + ATP = L-prolyl-tRNA(Pro) + AMP + diphosphate. In terms of biological role, catalyzes the attachment of proline to tRNA(Pro) in a two-step reaction: proline is first activated by ATP to form Pro-AMP and then transferred to the acceptor end of tRNA(Pro). As ProRS can inadvertently accommodate and process non-cognate amino acids such as alanine and cysteine, to avoid such errors it has two additional distinct editing activities against alanine. One activity is designated as 'pretransfer' editing and involves the tRNA(Pro)-independent hydrolysis of activated Ala-AMP. The other activity is designated 'posttransfer' editing and involves deacylation of mischarged Ala-tRNA(Pro). The misacylated Cys-tRNA(Pro) is not edited by ProRS. The protein is Proline--tRNA ligase of Burkholderia pseudomallei (strain K96243).